Reading from the N-terminus, the 180-residue chain is UPF0227 protein YcfP (180 aa).

It belongs to the UPF0227 family.

This chain is UPF0227 protein YcfP, found in Salmonella agona (strain SL483).